Reading from the N-terminus, the 286-residue chain is Orotidine 5'-phosphate decarboxylase (286 aa).

Catalysis depends on lysine 97, which acts as the Proton donor.

The protein belongs to the OMP decarboxylase family. Type 2 subfamily.

It catalyses the reaction orotidine 5'-phosphate + H(+) = UMP + CO2. The protein operates within pyrimidine metabolism; UMP biosynthesis via de novo pathway; UMP from orotate: step 2/2. The sequence is that of Orotidine 5'-phosphate decarboxylase (pyrF) from Clostridium acetobutylicum (strain ATCC 824 / DSM 792 / JCM 1419 / IAM 19013 / LMG 5710 / NBRC 13948 / NRRL B-527 / VKM B-1787 / 2291 / W).